A 249-amino-acid chain; its full sequence is 2,3-bisphosphoglycerate-dependent phosphoglycerate mutase (249 aa).

Residues arginine 9–asparagine 16, threonine 22–glycine 23, arginine 61, glutamate 88–tyrosine 91, lysine 99, arginine 115–arginine 116, and glycine 184–asparagine 185 contribute to the substrate site. The active-site Tele-phosphohistidine intermediate is the histidine 10. Residue glutamate 88 is the Proton donor/acceptor of the active site.

It belongs to the phosphoglycerate mutase family. BPG-dependent PGAM subfamily. Homodimer.

It carries out the reaction (2R)-2-phosphoglycerate = (2R)-3-phosphoglycerate. Its pathway is carbohydrate degradation; glycolysis; pyruvate from D-glyceraldehyde 3-phosphate: step 3/5. Functionally, catalyzes the interconversion of 2-phosphoglycerate and 3-phosphoglycerate. This is 2,3-bisphosphoglycerate-dependent phosphoglycerate mutase from Xanthomonas oryzae pv. oryzae (strain MAFF 311018).